The following is a 731-amino-acid chain: Cucumisin (731 aa).

A signal peptide spans 1–22 (MSSSLIFKLFFFSLFFSNRLAS). The propeptide at 23–110 (RLDSDDDGKN…VFLNEMNELH (88 aa)) is activation peptide. Residues 34–110 (YIVYMGRKLE…VFLNEMNELH (77 aa)) form the Inhibitor I9 domain. The region spanning 114-584 (SWDFLGFPLT…SGHVNPLKAV (471 aa)) is the Peptidase S8 domain. The active-site Charge relay system is aspartate 140. The cysteines at positions 166 and 174 are disulfide-linked. Catalysis depends on histidine 204, which acts as the Charge relay system. Intrachain disulfides connect cysteine 245–cysteine 250 and cysteine 380–cysteine 397. Asparagine 466 is a glycosylation site (N-linked (GlcNAc...) asparagine). The active-site Charge relay system is serine 525. The propeptide occupies 616–731 (GDYSACTSGN…RSPITITSLV (116 aa)). N-linked (GlcNAc...) asparagine glycosylation is present at asparagine 652.

It belongs to the peptidase S8 family. As to quaternary structure, monomer and dimer. The C-terminal propeptide is autocleaved. In terms of tissue distribution, specifically expressed in fruits. Expressed in sarcocarp (at protein level).

It localises to the secreted. The catalysed reaction is Hydrolysis of proteins with broad specificity.. This chain is Cucumisin, found in Cucumis melo (Muskmelon).